Consider the following 329-residue polypeptide: Probable carboxylesterase 13 (329 aa).

M1 carries the post-translational modification N-acetylmethionine. Positions 81 to 83 (HGG) match the Involved in the stabilization of the negatively charged intermediate by the formation of the oxyanion hole motif. Residues S165, D269, and H302 contribute to the active site.

Belongs to the 'GDXG' lipolytic enzyme family. In terms of tissue distribution, expressed in flowers.

It carries out the reaction a carboxylic ester + H2O = an alcohol + a carboxylate + H(+). Its function is as follows. Carboxylesterase acting on esters with varying acyl chain length. This Arabidopsis thaliana (Mouse-ear cress) protein is Probable carboxylesterase 13 (CXE13).